The chain runs to 123 residues: Ribosome-binding factor A (123 aa).

This sequence belongs to the RbfA family. In terms of assembly, monomer. Binds 30S ribosomal subunits, but not 50S ribosomal subunits or 70S ribosomes.

The protein localises to the cytoplasm. One of several proteins that assist in the late maturation steps of the functional core of the 30S ribosomal subunit. Associates with free 30S ribosomal subunits (but not with 30S subunits that are part of 70S ribosomes or polysomes). Required for efficient processing of 16S rRNA. May interact with the 5'-terminal helix region of 16S rRNA. The protein is Ribosome-binding factor A of Magnetococcus marinus (strain ATCC BAA-1437 / JCM 17883 / MC-1).